The sequence spans 237 residues: tRNA (guanine-N(7)-)-methyltransferase (237 aa).

4 residues coordinate S-adenosyl-L-methionine: E56, E81, D108, and D131. D131 is an active-site residue. Residues K135, D167, and 204-207 (TKFE) each bind substrate.

The protein belongs to the class I-like SAM-binding methyltransferase superfamily. TrmB family.

The enzyme catalyses guanosine(46) in tRNA + S-adenosyl-L-methionine = N(7)-methylguanosine(46) in tRNA + S-adenosyl-L-homocysteine. Its pathway is tRNA modification; N(7)-methylguanine-tRNA biosynthesis. In terms of biological role, catalyzes the formation of N(7)-methylguanine at position 46 (m7G46) in tRNA. The protein is tRNA (guanine-N(7)-)-methyltransferase of Legionella pneumophila (strain Paris).